We begin with the raw amino-acid sequence, 137 residues long: Large ribosomal subunit protein uL16 (137 aa).

It belongs to the universal ribosomal protein uL16 family. Part of the 50S ribosomal subunit.

Binds 23S rRNA and is also seen to make contacts with the A and possibly P site tRNAs. This is Large ribosomal subunit protein uL16 from Nitratidesulfovibrio vulgaris (strain DSM 19637 / Miyazaki F) (Desulfovibrio vulgaris).